Consider the following 351-residue polypeptide: GDSL esterase/lipase At3g53100 (351 aa).

Residues 1-24 form the signal peptide; it reads MQKMRVSGFRVLLLVSCFFCKSKG. The Nucleophile role is filled by S36. 3 N-linked (GlcNAc...) asparagine glycosylation sites follow: N234, N254, and N318. Residues D326 and H329 contribute to the active site.

Belongs to the 'GDSL' lipolytic enzyme family.

Its subcellular location is the secreted. In Arabidopsis thaliana (Mouse-ear cress), this protein is GDSL esterase/lipase At3g53100.